The primary structure comprises 315 residues: MEKESEIQSLPPTRRYTISLALPISSLNVAYNLQLKTSFVWKISRIVSLYGIDEIILLEDPEYVQNTQVHTLSSDAYLKDPTKFLTDLLCYFETPFFMRKELFPLNPHLKYTSCFPLLPLRNDKASTVNIEFPYREGIVTHPSPQAKNKYIINAGLSHNVIVSSPSVLAPRTRVTVRLKAQSPNEEGQLQGDIVSFSAPREKGGHYWGYKVRSCLSSQLCKSSPYKGGYDFVVQINSQTSAITSKELEASLPSSFRHAVLVLQDNVVQKELVDSTAKSISFNPFPVSFLNDPIPEEILLAAMTRLSDMLLMHGRR.

Belongs to the class IV-like SAM-binding methyltransferase superfamily.

Its subcellular location is the cytoplasm. The protein localises to the nucleus. This Schizosaccharomyces pombe (strain 972 / ATCC 24843) (Fission yeast) protein is Putative methyltransferase SPBC8D2.16c.